Here is a 268-residue protein sequence, read N- to C-terminus: Type III pantothenate kinase (268 aa).

Position 6–13 (6–13 (DVGNTNIV)) interacts with ATP. Substrate contacts are provided by residues Tyr-100 and 107-110 (GADR). Asp-109 acts as the Proton acceptor in catalysis. Residue Asp-129 coordinates K(+). Thr-132 contacts ATP. Thr-184 is a binding site for substrate.

Belongs to the type III pantothenate kinase family. As to quaternary structure, homodimer. NH4(+) serves as cofactor. Requires K(+) as cofactor.

It is found in the cytoplasm. It carries out the reaction (R)-pantothenate + ATP = (R)-4'-phosphopantothenate + ADP + H(+). The protein operates within cofactor biosynthesis; coenzyme A biosynthesis; CoA from (R)-pantothenate: step 1/5. Catalyzes the phosphorylation of pantothenate (Pan), the first step in CoA biosynthesis. This is Type III pantothenate kinase from Alkaliphilus metalliredigens (strain QYMF).